The primary structure comprises 648 residues: Macrolide export ATP-binding/permease protein MacB (648 aa).

One can recognise an ABC transporter domain in the interval 5 to 243 (LELCNVSRSY…QGVDAAVVNT (239 aa)). An ATP-binding site is contributed by 41-48 (GVSGSGKS). Helical transmembrane passes span 273 to 293 (LLTM…VVVG), 417 to 437 (ANVV…IGVA), 523 to 543 (LFLT…VMNI), 577 to 597 (VLVC…IAFM), and 611 to 631 (LTAL…FGWL).

This sequence belongs to the ABC transporter superfamily. Macrolide exporter (TC 3.A.1.122) family. Homodimer. Part of the tripartite efflux system MacAB-TolC, which is composed of an inner membrane transporter, MacB, a periplasmic membrane fusion protein, MacA, and an outer membrane component, TolC. The complex forms a large protein conduit and can translocate molecules across both the inner and outer membranes. Interacts with MacA.

The protein resides in the cell inner membrane. Part of the tripartite efflux system MacAB-TolC. MacB is a non-canonical ABC transporter that contains transmembrane domains (TMD), which form a pore in the inner membrane, and an ATP-binding domain (NBD), which is responsible for energy generation. Confers resistance against macrolides. The protein is Macrolide export ATP-binding/permease protein MacB of Salmonella choleraesuis (strain SC-B67).